The sequence spans 213 residues: Bacteriochlorophyll synthase 23 kDa chain (213 aa).

It functions in the pathway porphyrin-containing compound metabolism; bacteriochlorophyll biosynthesis (light-independent). The chain is Bacteriochlorophyll synthase 23 kDa chain (bchJ) from Rhodobacter capsulatus (strain ATCC BAA-309 / NBRC 16581 / SB1003).